The primary structure comprises 117 residues: MPSSGSGKAIGQLFESMSDNSFTCTVVNRGYKGGRDAHITVHNSKGSRHHFGDINYSWQSHSESNTSNGHVKVDADEYNMFLSLNDFMSSEKKRYDAKQVADVLWLEFTNQAGIEYD.

This is an uncharacterized protein from Sinorhizobium fredii (strain NBRC 101917 / NGR234).